The primary structure comprises 634 residues: Chaperone protein HtpG (634 aa).

Positions methionine 1–arginine 342 are a; substrate-binding. Positions glutamate 343–glutamine 559 are b. The c stretch occupies residues isoleucine 560–alanine 634.

Belongs to the heat shock protein 90 family. In terms of assembly, homodimer.

It localises to the cytoplasm. Functionally, molecular chaperone. Has ATPase activity. This chain is Chaperone protein HtpG, found in Pseudomonas putida (strain ATCC 47054 / DSM 6125 / CFBP 8728 / NCIMB 11950 / KT2440).